Reading from the N-terminus, the 388-residue chain is 4-hydroxy-3-methylbut-2-en-1-yl diphosphate synthase (flavodoxin) (388 aa).

Cys281, Cys284, Cys316, and Glu323 together coordinate [4Fe-4S] cluster.

This sequence belongs to the IspG family. Requires [4Fe-4S] cluster as cofactor.

The catalysed reaction is (2E)-4-hydroxy-3-methylbut-2-enyl diphosphate + oxidized [flavodoxin] + H2O + 2 H(+) = 2-C-methyl-D-erythritol 2,4-cyclic diphosphate + reduced [flavodoxin]. Its pathway is isoprenoid biosynthesis; isopentenyl diphosphate biosynthesis via DXP pathway; isopentenyl diphosphate from 1-deoxy-D-xylulose 5-phosphate: step 5/6. Its function is as follows. Converts 2C-methyl-D-erythritol 2,4-cyclodiphosphate (ME-2,4cPP) into 1-hydroxy-2-methyl-2-(E)-butenyl 4-diphosphate. This is 4-hydroxy-3-methylbut-2-en-1-yl diphosphate synthase (flavodoxin) from Paenarthrobacter aurescens (strain TC1).